The sequence spans 184 residues: Guanylate kinase (184 aa).

The Guanylate kinase-like domain maps to M4–I182. ATP is bound at residue G11–D18.

It belongs to the guanylate kinase family.

It is found in the cytoplasm. The enzyme catalyses GMP + ATP = GDP + ADP. Functionally, essential for recycling GMP and indirectly, cGMP. In Frankia casuarinae (strain DSM 45818 / CECT 9043 / HFP020203 / CcI3), this protein is Guanylate kinase.